A 147-amino-acid chain; its full sequence is Small ribosomal subunit protein uS12 (147 aa).

Belongs to the universal ribosomal protein uS12 family. In terms of assembly, part of the 30S ribosomal subunit.

Functionally, with S4 and S5 plays an important role in translational accuracy. Located at the interface of the 30S and 50S subunits. The chain is Small ribosomal subunit protein uS12 from Sulfurisphaera tokodaii (strain DSM 16993 / JCM 10545 / NBRC 100140 / 7) (Sulfolobus tokodaii).